The following is a 239-amino-acid chain: Protein GrpE (239 aa).

2 disordered regions span residues 1-54 (MIEN…ELKN) and 208-239 (SMGP…SEDV). A compositionally biased stretch (polar residues) spans 19 to 42 (QDNALENVSSAQELTTENNELSSQ). A compositionally biased stretch (basic and acidic residues) spans 43–53 (KTEEINTEELK). Residues 228–239 (DIDSEENTSEDV) show a composition bias toward acidic residues.

Belongs to the GrpE family. In terms of assembly, homodimer.

The protein resides in the cytoplasm. Participates actively in the response to hyperosmotic and heat shock by preventing the aggregation of stress-denatured proteins, in association with DnaK and GrpE. It is the nucleotide exchange factor for DnaK and may function as a thermosensor. Unfolded proteins bind initially to DnaJ; upon interaction with the DnaJ-bound protein, DnaK hydrolyzes its bound ATP, resulting in the formation of a stable complex. GrpE releases ADP from DnaK; ATP binding to DnaK triggers the release of the substrate protein, thus completing the reaction cycle. Several rounds of ATP-dependent interactions between DnaJ, DnaK and GrpE are required for fully efficient folding. This Prochlorococcus marinus (strain AS9601) protein is Protein GrpE.